The sequence spans 881 residues: DNA mismatch repair protein MutS (881 aa).

632–639 (GPNMGGKS) contacts ATP.

Belongs to the DNA mismatch repair MutS family.

This protein is involved in the repair of mismatches in DNA. It is possible that it carries out the mismatch recognition step. This protein has a weak ATPase activity. This is DNA mismatch repair protein MutS from Acinetobacter baylyi (strain ATCC 33305 / BD413 / ADP1).